Here is a 547-residue protein sequence, read N- to C-terminus: Glucose-6-phosphate isomerase (547 aa).

The Proton donor role is filled by Glu-351. Active-site residues include His-382 and Lys-509.

The protein belongs to the GPI family.

The protein resides in the cytoplasm. It carries out the reaction alpha-D-glucose 6-phosphate = beta-D-fructose 6-phosphate. It functions in the pathway carbohydrate biosynthesis; gluconeogenesis. Its pathway is carbohydrate degradation; glycolysis; D-glyceraldehyde 3-phosphate and glycerone phosphate from D-glucose: step 2/4. Functionally, catalyzes the reversible isomerization of glucose-6-phosphate to fructose-6-phosphate. This is Glucose-6-phosphate isomerase from Coxiella burnetii (strain CbuK_Q154) (Coxiella burnetii (strain Q154)).